Consider the following 406-residue polypeptide: Probable tRNA sulfurtransferase (406 aa).

In terms of domain architecture, THUMP spans 62-167 (AEVSNRLTKV…QDATYLSFED (106 aa)). Residues 185 to 186 (ML), 210 to 211 (HF), arginine 267, glycine 289, and glutamine 298 each bind ATP.

It belongs to the ThiI family.

It is found in the cytoplasm. It carries out the reaction [ThiI sulfur-carrier protein]-S-sulfanyl-L-cysteine + a uridine in tRNA + 2 reduced [2Fe-2S]-[ferredoxin] + ATP + H(+) = [ThiI sulfur-carrier protein]-L-cysteine + a 4-thiouridine in tRNA + 2 oxidized [2Fe-2S]-[ferredoxin] + AMP + diphosphate. It catalyses the reaction [ThiS sulfur-carrier protein]-C-terminal Gly-Gly-AMP + S-sulfanyl-L-cysteinyl-[cysteine desulfurase] + AH2 = [ThiS sulfur-carrier protein]-C-terminal-Gly-aminoethanethioate + L-cysteinyl-[cysteine desulfurase] + A + AMP + 2 H(+). It functions in the pathway cofactor biosynthesis; thiamine diphosphate biosynthesis. Its function is as follows. Catalyzes the ATP-dependent transfer of a sulfur to tRNA to produce 4-thiouridine in position 8 of tRNAs, which functions as a near-UV photosensor. Also catalyzes the transfer of sulfur to the sulfur carrier protein ThiS, forming ThiS-thiocarboxylate. This is a step in the synthesis of thiazole, in the thiamine biosynthesis pathway. The sulfur is donated as persulfide by IscS. In Lactococcus lactis subsp. cremoris (strain MG1363), this protein is Probable tRNA sulfurtransferase.